The sequence spans 411 residues: LL-diaminopimelate aminotransferase (411 aa).

2 residues coordinate substrate: Tyr15 and Gly42. Residues Tyr72, 108–109 (SK), Tyr132, Asn187, Tyr218, and 246–248 (SFS) contribute to the pyridoxal 5'-phosphate site. Substrate contacts are provided by Lys109, Tyr132, and Asn187. The residue at position 249 (Lys249) is an N6-(pyridoxal phosphate)lysine. Arg257 and Asn292 together coordinate pyridoxal 5'-phosphate. Substrate is bound by residues Asn292 and Arg388.

It belongs to the class-I pyridoxal-phosphate-dependent aminotransferase family. LL-diaminopimelate aminotransferase subfamily. As to quaternary structure, homodimer. The cofactor is pyridoxal 5'-phosphate.

It carries out the reaction (2S,6S)-2,6-diaminopimelate + 2-oxoglutarate = (S)-2,3,4,5-tetrahydrodipicolinate + L-glutamate + H2O + H(+). The protein operates within amino-acid biosynthesis; L-lysine biosynthesis via DAP pathway; LL-2,6-diaminopimelate from (S)-tetrahydrodipicolinate (aminotransferase route): step 1/1. In terms of biological role, involved in the synthesis of meso-diaminopimelate (m-DAP or DL-DAP), required for both lysine and peptidoglycan biosynthesis. Catalyzes the direct conversion of tetrahydrodipicolinate to LL-diaminopimelate. In Gloeothece citriformis (strain PCC 7424) (Cyanothece sp. (strain PCC 7424)), this protein is LL-diaminopimelate aminotransferase.